Consider the following 393-residue polypeptide: MTNSNRIKLTWISFLSYALTGALVIVTGMVMGNIADYFQLPVSSMSNTFTFLNAGILISIFLNAWLMEIIPLKTQLRFGFILMVLAVAGLMFSHSLALFSAAMFVLGLVSGITMSIGTFLITQLYEGRQRGSRLLFTDSFFSMAGMIFPMVAAFLLARSIEWYWVYACIGLVYLAIFILTFGCEFPALGKHAQHSQAPVAKEKWGIGVLFLAVAALCYILGQLGFISWVPEYAKGLGMSLNDAGALVSDFWMSYMFGMWAFSFILRFFDLQRILTVLAGIAAVLMYLFITGTQAHMPWFILTLGFFSSAIYTSIITLGSQQTKVASPKLVNFILTCGTIGTMLTFVVTGPIVAHSGPQAALLTANGLYAVVFVMCFALGFVSRHRQHSSPAAH.

12 helical membrane passes run 11 to 31 (WISFLSYALTGALVIVTGMVM), 51 to 71 (FLNAGILISIFLNAWLMEIIP), 78 to 98 (FGFILMVLAVAGLMFSHSLAL), 101 to 121 (AAMFVLGLVSGITMSIGTFLI), 134 to 154 (LLFTDSFFSMAGMIFPMVAAF), 162 to 182 (WYWVYACIGLVYLAIFILTFG), 206 to 226 (IGVLFLAVAALCYILGQLGFI), 245 to 265 (ALVSDFWMSYMFGMWAFSFIL), 273 to 293 (ILTVLAGIAAVLMYLFITGTQ), 298 to 318 (WFILTLGFFSSAIYTSIITLG), 332 to 352 (FILTCGTIGTMLTFVVTGPIV), and 361 to 381 (LLTANGLYAVVFVMCFALGFV).

Belongs to the major facilitator superfamily. TsgA family.

It is found in the cell inner membrane. The protein is Protein TsgA of Salmonella schwarzengrund (strain CVM19633).